A 97-amino-acid chain; its full sequence is Osteocalcin (97 aa).

Positions 1 to 18 (MKTLAILVLCSLAAICLT) are cleaved as a signal peptide. A propeptide spanning residues 19-52 (SSASAGAQPAGDSPVQGGLFMEKDQASAVVRQTR) is cleaved from the precursor. In terms of domain architecture, Gla spans 53-93 (AAKELTLAQTESLREVCETNMACDEMADAQGIVAAYQAFYG). Glu63, Glu67, Glu70, and Asp76 together coordinate Ca(2+). A 4-carboxyglutamate mark is found at Glu63, Glu67, and Glu70. Cysteines 69 and 75 form a disulfide. Glu77 carries the post-translational modification 4-carboxyglutamate.

The protein belongs to the osteocalcin/matrix Gla protein family. In terms of processing, gamma-carboxyglutamate residues are formed by vitamin K dependent carboxylation by GGCX. These residues are essential for the binding of calcium. In terms of tissue distribution, in the branchial arches, BGP is found outside the chondrocyte-containing zone. It is found in some cells in the basal zone of the branchial filaments, near the branchial arches, and within the extracellular matrix in the medial zone. In the vertebra, BGP is found in the mineralized bone matrix.

The protein resides in the secreted. Its function is as follows. The carboxylated form is one of the main organic components of the bone matrix, which constitutes 1-2% of the total bone protein. The carboxylated form binds strongly to apatite and calcium. This Argyrosomus regius (Meagre) protein is Osteocalcin (bglap).